Consider the following 877-residue polypeptide: Phosphoenolpyruvate carboxylase (877 aa).

Active-site residues include H138 and K544.

Belongs to the PEPCase type 1 family. The cofactor is Mg(2+).

The enzyme catalyses oxaloacetate + phosphate = phosphoenolpyruvate + hydrogencarbonate. Functionally, forms oxaloacetate, a four-carbon dicarboxylic acid source for the tricarboxylic acid cycle. In Vibrio parahaemolyticus serotype O3:K6 (strain RIMD 2210633), this protein is Phosphoenolpyruvate carboxylase.